The primary structure comprises 146 residues: Hemoglobin subunit beta (146 aa).

N-acetylvaline is present on Val-1. The 145-residue stretch at 2 to 146 (NLTAAEKTQV…VANALAHKYH (145 aa)) folds into the Globin domain. Thr-12 is modified (phosphothreonine). Position 59 is an N6-acetyllysine (Lys-59). His-63 is a heme b binding site. The residue at position 82 (Lys-82) is an N6-acetyllysine. Residue His-92 participates in heme b binding. Cys-93 carries the post-translational modification S-nitrosocysteine. Lys-144 is subject to N6-acetyllysine.

It belongs to the globin family. As to quaternary structure, heterotetramer of two alpha chains and two beta chains. In terms of tissue distribution, red blood cells.

Involved in oxygen transport from the lung to the various peripheral tissues. The chain is Hemoglobin subunit beta (HBB) from Loxodonta africana (African elephant).